The chain runs to 469 residues: Proline--tRNA ligase (469 aa).

It belongs to the class-II aminoacyl-tRNA synthetase family. ProS type 3 subfamily. As to quaternary structure, homodimer.

The protein resides in the cytoplasm. It carries out the reaction tRNA(Pro) + L-proline + ATP = L-prolyl-tRNA(Pro) + AMP + diphosphate. In terms of biological role, catalyzes the attachment of proline to tRNA(Pro) in a two-step reaction: proline is first activated by ATP to form Pro-AMP and then transferred to the acceptor end of tRNA(Pro). In Methanobrevibacter smithii (strain ATCC 35061 / DSM 861 / OCM 144 / PS), this protein is Proline--tRNA ligase.